The sequence spans 732 residues: Putative pectinesterase/pectinesterase inhibitor 28 (732 aa).

The chain crosses the membrane as a helical span at residues 17 to 37 (VIISISSVLLISMVVAVTIGV). 4 N-linked (GlcNAc...) asparagine glycosylation sites follow: Asn40, Asn93, Asn278, and Asn297. Residues 51–204 (TTSVKAIKDV…VQLTHNGLAM (154 aa)) form a pectinesterase inhibitor 28 region. The segment at 252 to 548 (DIVVAQDGSG…FTPAQYIQGD (297 aa)) is pectinesterase 28. Thr327 and Gln357 together coordinate substrate. The Proton donor; for pectinesterase activity role is filled by Asp380. A disulfide bond links Cys394 and Cys414. Asp401 acts as the Nucleophile; for pectinesterase activity in catalysis. Asn413 carries N-linked (GlcNAc...) asparagine glycosylation. Positions 469 and 471 each coordinate substrate. 3 N-linked (GlcNAc...) asparagine glycosylation sites follow: Asn566, Asn570, and Asn581. Composition is skewed to low complexity over residues 570-620 (NSTV…PSTS) and 633-732 (PSMV…SSIG). Residues 570-732 (NSTVTGSSLS…PSASPQSSIG (163 aa)) are disordered.

In the N-terminal section; belongs to the PMEI family. The protein in the C-terminal section; belongs to the pectinesterase family. Expressed in flower buds.

The protein resides in the membrane. The enzyme catalyses [(1-&gt;4)-alpha-D-galacturonosyl methyl ester](n) + n H2O = [(1-&gt;4)-alpha-D-galacturonosyl](n) + n methanol + n H(+). Its pathway is glycan metabolism; pectin degradation; 2-dehydro-3-deoxy-D-gluconate from pectin: step 1/5. Its function is as follows. Acts in the modification of cell walls via demethylesterification of cell wall pectin. This is Putative pectinesterase/pectinesterase inhibitor 28 (PME28) from Arabidopsis thaliana (Mouse-ear cress).